Reading from the N-terminus, the 335-residue chain is Biotin synthase (335 aa).

The Radical SAM core domain occupies 43 to 269 (YFGKKVKLNM…INPTKEIRIA (227 aa)). [4Fe-4S] cluster-binding residues include C61, C65, and C68. [2Fe-2S] cluster is bound by residues C104, C137, C197, and R267.

This sequence belongs to the radical SAM superfamily. Biotin synthase family. As to quaternary structure, homodimer. Requires [4Fe-4S] cluster as cofactor. [2Fe-2S] cluster serves as cofactor.

It catalyses the reaction (4R,5S)-dethiobiotin + (sulfur carrier)-SH + 2 reduced [2Fe-2S]-[ferredoxin] + 2 S-adenosyl-L-methionine = (sulfur carrier)-H + biotin + 2 5'-deoxyadenosine + 2 L-methionine + 2 oxidized [2Fe-2S]-[ferredoxin]. It participates in cofactor biosynthesis; biotin biosynthesis; biotin from 7,8-diaminononanoate: step 2/2. Its function is as follows. Catalyzes the conversion of dethiobiotin (DTB) to biotin by the insertion of a sulfur atom into dethiobiotin via a radical-based mechanism. In Staphylococcus aureus (strain USA300), this protein is Biotin synthase.